The chain runs to 336 residues: Ephrin-B2 (336 aa).

The signal sequence occupies residues 1 to 28; that stretch reads MAMARSRRDSVWKYCWGLLMVLCRTAIS. Topologically, residues 29–232 are extracellular; it reads RSIVLEPIYW…LLGSEVALFA (204 aa). The 137-residue stretch at 31 to 167 folds into the Ephrin RBD domain; that stretch reads IVLEPIYWNS…TRAMKILMKV (137 aa). Asn39 carries N-linked (GlcNAc...) asparagine glycosylation. Intrachain disulfides connect Cys65–Cys104 and Cys92–Cys156. N-linked (GlcNAc...) asparagine glycosylation occurs at Asn142. The tract at residues 170-216 is disordered; the sequence is DASSAGSARNHGPTRRPELEAGTNGRSSTTSPFVKPNPGSSTDGNSA. Positions 193–216 are enriched in polar residues; that stretch reads NGRSSTTSPFVKPNPGSSTDGNSA. Residues 233 to 253 form a helical membrane-spanning segment; it reads GIASGCIIFIVIIITLVVLLL. Over 254–336 the chain is Cytoplasmic; that stretch reads KYRRRHRKHS…QSPANIYYKV (83 aa). Ser263 carries the phosphoserine modification. A Phosphothreonine modification is found at Thr277. Position 280 is an omega-N-methylarginine (Arg280). Positions 334 to 336 match the PDZ-binding motif; it reads YKV.

The protein belongs to the ephrin family. In terms of assembly, interacts with PDZRN3. Binds to the ephrin receptor EPHA3, EPHA4 and EPHB4. Inducible phosphorylation of tyrosine residues in the cytoplasmic domain. Expressed in inner and outer pillar cells of the organ of Corti (at protein level). Expressed on lateral floor plate cells, specifically on commissural axon segments that have passed through the floor plate. Expressed in cells of the retinal ganglion cell layer during retinal axon guidance to the optic disk. Expressed in myogenic progenitor cells.

It localises to the cell membrane. It is found in the cell junction. The protein resides in the adherens junction. Its function is as follows. Cell surface transmembrane ligand for Eph receptors, a family of receptor tyrosine kinases which are crucial for migration, repulsion and adhesion during neuronal, vascular and epithelial development. Binds promiscuously Eph receptors residing on adjacent cells, leading to contact-dependent bidirectional signaling into neighboring cells. The signaling pathway downstream of the receptor is referred to as forward signaling while the signaling pathway downstream of the ephrin ligand is referred to as reverse signaling. Binds to receptor tyrosine kinase including EPHA4, EPHA3 and EPHB4. Together with EPHB4 plays a central role in heart morphogenesis and angiogenesis through regulation of cell adhesion and cell migration. EPHB4-mediated forward signaling controls cellular repulsion and segregation from EFNB2-expressing cells. May play a role in constraining the orientation of longitudinally projecting axons. The chain is Ephrin-B2 (Efnb2) from Mus musculus (Mouse).